We begin with the raw amino-acid sequence, 496 residues long: Angiopoietin-2 (496 aa).

Residues 1–18 (MWQIVFLTFGCDLVLASA) form the signal peptide. Residues Asn-89, Asn-119, Asn-133, Asn-151, Asn-240, and Asn-304 are each glycosylated (N-linked (GlcNAc...) asparagine). A coiled-coil region spans residues 159 to 256 (QLLQHSISTN…QQHDLMETVN (98 aa)). Residues 280 to 496 (TFRDCAEIFK…TTMMIRPADF (217 aa)) enclose the Fibrinogen C-terminal domain. The cysteines at positions 284 and 313 are disulfide-linked. 4 residues coordinate Ca(2+): Asp-429, Asp-431, Cys-433, and Cys-435. 2 cysteine pairs are disulfide-bonded: Cys-433-Cys-435 and Cys-437-Cys-450.

As to quaternary structure, interacts with TEK/TIE2, competing for the same binding site as ANGPT1. Interacts with ITGA5. Interacts with SVEP1/polydom. Interacts with THBD; this interaction significantly inhibits the generation of activated PC and TAFIa/CPB2 by the thrombin/thrombomodulin complex.

It localises to the secreted. In terms of biological role, binds to TEK/TIE2, competing for the ANGPT1 binding site, and modulating ANGPT1 signaling. Can induce tyrosine phosphorylation of TEK/TIE2 in the absence of ANGPT1. In the absence of angiogenic inducers, such as VEGF, ANGPT2-mediated loosening of cell-matrix contacts may induce endothelial cell apoptosis with consequent vascular regression. In concert with VEGF, it may facilitate endothelial cell migration and proliferation, thus serving as a permissive angiogenic signal. Involved in the regulation of lymphangiogenesis. The polypeptide is Angiopoietin-2 (Angpt2) (Rattus norvegicus (Rat)).